The chain runs to 258 residues: 6-carboxyhexanoate--CoA ligase (258 aa).

The protein belongs to the BioW family. Homodimer. It depends on Mg(2+) as a cofactor.

It carries out the reaction heptanedioate + ATP + CoA = 6-carboxyhexanoyl-CoA + AMP + diphosphate. It participates in metabolic intermediate metabolism; pimeloyl-CoA biosynthesis; pimeloyl-CoA from pimelate: step 1/1. Functionally, catalyzes the transformation of pimelate into pimeloyl-CoA with concomitant hydrolysis of ATP to AMP. This chain is 6-carboxyhexanoate--CoA ligase, found in Bacillus atrophaeus (strain 1942).